Here is a 580-residue protein sequence, read N- to C-terminus: Lysine--tRNA ligase (580 aa).

Residues 43–51 (PSGPIHLGN) carry the 'HIGH' region motif. The disordered stretch occupies residues 178-209 (KAPAKKSQKPLDEAELEAAEGSGAAAEDDGSS). The segment covering 196-209 (AEGSGAAAEDDGSS) has biased composition (low complexity). The short motif at 325 to 329 (KMSSS) is the 'KMSKS' region element.

It belongs to the class-I aminoacyl-tRNA synthetase family.

It localises to the cytoplasm. It carries out the reaction tRNA(Lys) + L-lysine + ATP = L-lysyl-tRNA(Lys) + AMP + diphosphate. This chain is Lysine--tRNA ligase (lysS), found in Streptomyces coelicolor (strain ATCC BAA-471 / A3(2) / M145).